The chain runs to 217 residues: Large ribosomal subunit protein uL4 (217 aa).

The interval 42–100 (RAAARQGTHSTKTRGDVSGGGRKPYRQKGTGRARQGSTRAPQFTGGGVVHGPKPRDYSQ) is disordered.

It belongs to the universal ribosomal protein uL4 family. Part of the 50S ribosomal subunit.

In terms of biological role, one of the primary rRNA binding proteins, this protein initially binds near the 5'-end of the 23S rRNA. It is important during the early stages of 50S assembly. It makes multiple contacts with different domains of the 23S rRNA in the assembled 50S subunit and ribosome. Its function is as follows. Forms part of the polypeptide exit tunnel. The protein is Large ribosomal subunit protein uL4 of Mycolicibacterium paratuberculosis (strain ATCC BAA-968 / K-10) (Mycobacterium paratuberculosis).